Consider the following 276-residue polypeptide: ATP synthase subunit a 2 (276 aa).

5 helical membrane-spanning segments follow: residues Ala-45 to Phe-65, Val-105 to Leu-125, Val-154 to Ile-173, Leu-226 to Trp-246, and Ala-247 to Val-267.

The protein belongs to the ATPase A chain family. In terms of assembly, F-type ATPases have 2 components, CF(1) - the catalytic core - and CF(0) - the membrane proton channel. CF(1) has five subunits: alpha(3), beta(3), gamma(1), delta(1), epsilon(1). CF(0) has three main subunits: a(1), b(2) and c(9-12). The alpha and beta chains form an alternating ring which encloses part of the gamma chain. CF(1) is attached to CF(0) by a central stalk formed by the gamma and epsilon chains, while a peripheral stalk is formed by the delta and b chains.

It is found in the cell inner membrane. Its function is as follows. Key component of the proton channel; it plays a direct role in the translocation of protons across the membrane. The polypeptide is ATP synthase subunit a 2 (Hahella chejuensis (strain KCTC 2396)).